A 108-amino-acid chain; its full sequence is Heme-degrading monooxygenase HmoA (108 aa).

One can recognise an ABM domain in the interval 2-95 (FVQLRKMTVK…DYLISTEVSM (94 aa)). Residue His76 coordinates heme.

This sequence belongs to the antibiotic biosynthesis monooxygenase family. In terms of assembly, homodimer.

The protein localises to the cytoplasm. It catalyses the reaction heme b + 3 reduced [NADPH--hemoprotein reductase] + 3 O2 = biliverdin IXalpha + CO + Fe(2+) + 3 oxidized [NADPH--hemoprotein reductase] + 3 H2O + H(+). Its function is as follows. Allows bacterial pathogens to use the host heme as an iron source. Catalyzes the oxidative degradation of the heme macrocyclic porphyrin ring in the presence of a suitable electron donor such as ascorbate or NADPH--cytochrome P450 reductase, with subsequent release of free iron. This Bacillus subtilis (strain 168) protein is Heme-degrading monooxygenase HmoA (hmoA).